A 392-amino-acid polypeptide reads, in one-letter code: DNA primase small subunit PriS (392 aa).

Residues aspartate 98, aspartate 100, and aspartate 295 contribute to the active site.

The protein belongs to the eukaryotic-type primase small subunit family. Heterodimer of a small subunit (PriS) and a large subunit (PriL). It depends on Mg(2+) as a cofactor. The cofactor is Mn(2+).

Its function is as follows. Catalytic subunit of DNA primase, an RNA polymerase that catalyzes the synthesis of short RNA molecules used as primers for DNA polymerase during DNA replication. The small subunit contains the primase catalytic core and has DNA synthesis activity on its own. Binding to the large subunit stabilizes and modulates the activity, increasing the rate of DNA synthesis while decreasing the length of the DNA fragments, and conferring RNA synthesis capability. The DNA polymerase activity may enable DNA primase to also catalyze primer extension after primer synthesis. May also play a role in DNA repair. The chain is DNA primase small subunit PriS from Haloarcula marismortui (strain ATCC 43049 / DSM 3752 / JCM 8966 / VKM B-1809) (Halobacterium marismortui).